An 86-amino-acid polypeptide reads, in one-letter code: Stage V sporulation protein S (86 aa).

Interferes with sporulation at an early stage. Seems to play a positive role in allowing cells to progress beyond stage V of sporulation. The chain is Stage V sporulation protein S from Bacillus subtilis (strain 168).